The sequence spans 212 residues: Probable nicotinate-nucleotide adenylyltransferase (212 aa).

Belongs to the NadD family.

The catalysed reaction is nicotinate beta-D-ribonucleotide + ATP + H(+) = deamido-NAD(+) + diphosphate. It functions in the pathway cofactor biosynthesis; NAD(+) biosynthesis; deamido-NAD(+) from nicotinate D-ribonucleotide: step 1/1. Catalyzes the reversible adenylation of nicotinate mononucleotide (NaMN) to nicotinic acid adenine dinucleotide (NaAD). The chain is Probable nicotinate-nucleotide adenylyltransferase from Methylibium petroleiphilum (strain ATCC BAA-1232 / LMG 22953 / PM1).